A 126-amino-acid chain; its full sequence is Small ribosomal subunit protein uS13 (126 aa).

Residues 93-126 (RRGLPVRGQRTKTNARTRKGPKRTVAGKKKAGRK) are disordered.

Belongs to the universal ribosomal protein uS13 family. In terms of assembly, part of the 30S ribosomal subunit. Forms a loose heterodimer with protein S19. Forms two bridges to the 50S subunit in the 70S ribosome.

Functionally, located at the top of the head of the 30S subunit, it contacts several helices of the 16S rRNA. In the 70S ribosome it contacts the 23S rRNA (bridge B1a) and protein L5 of the 50S subunit (bridge B1b), connecting the 2 subunits; these bridges are implicated in subunit movement. Contacts the tRNAs in the A and P-sites. The sequence is that of Small ribosomal subunit protein uS13 from Beutenbergia cavernae (strain ATCC BAA-8 / DSM 12333 / CCUG 43141 / JCM 11478 / NBRC 16432 / NCIMB 13614 / HKI 0122).